We begin with the raw amino-acid sequence, 158 residues long: Large ribosomal subunit protein uL11 (158 aa).

It belongs to the universal ribosomal protein uL11 family. As to quaternary structure, part of the ribosomal stalk of the 50S ribosomal subunit. Interacts with L10 and the large rRNA to form the base of the stalk. L10 forms an elongated spine to which L12 dimers bind in a sequential fashion forming a multimeric L10(L12)X complex.

In terms of biological role, forms part of the ribosomal stalk which helps the ribosome interact with GTP-bound translation factors. This Methanoregula boonei (strain DSM 21154 / JCM 14090 / 6A8) protein is Large ribosomal subunit protein uL11.